We begin with the raw amino-acid sequence, 122 residues long: uncharacterized protein (122 aa).

The next 4 membrane-spanning stretches (helical) occupy residues 7-27, 29-49, 62-82, and 89-109; these read IVAIVTSIAVICISLTVIFCD, LVLAVGVPTLVLLWLVFLGWI, AITGSIVIAFFIILIAISKNP, and KEIFSLFFGMVTTIIGYYFGY.

It localises to the cell membrane. This is an uncharacterized protein from Methanocaldococcus jannaschii (strain ATCC 43067 / DSM 2661 / JAL-1 / JCM 10045 / NBRC 100440) (Methanococcus jannaschii).